The following is a 315-amino-acid chain: Protein-L-isoaspartate O-methyltransferase (315 aa).

2 disordered regions span residues 1–47 (MSGE…KPAA) and 59–89 (RALP…AAPK). A compositionally biased stretch (basic and acidic residues) spans 14 to 34 (EDLKRAPRKSEVRSGSGERHA). Low complexity-rich tracts occupy residues 35 to 47 (ASAV…KPAA) and 59 to 81 (RALP…LKPA). Ser162 is an active-site residue.

The protein belongs to the methyltransferase superfamily. L-isoaspartyl/D-aspartyl protein methyltransferase family.

The protein resides in the cytoplasm. The enzyme catalyses [protein]-L-isoaspartate + S-adenosyl-L-methionine = [protein]-L-isoaspartate alpha-methyl ester + S-adenosyl-L-homocysteine. Its function is as follows. Catalyzes the methyl esterification of L-isoaspartyl residues in peptides and proteins that result from spontaneous decomposition of normal L-aspartyl and L-asparaginyl residues. It plays a role in the repair and/or degradation of damaged proteins. This Burkholderia ambifaria (strain MC40-6) protein is Protein-L-isoaspartate O-methyltransferase.